A 313-amino-acid polypeptide reads, in one-letter code: Ribosomal RNA small subunit methyltransferase H (313 aa).

S-adenosyl-L-methionine is bound by residues 35–37, Asp55, Phe81, Asp103, and Gln110; that span reads GGH.

The protein belongs to the methyltransferase superfamily. RsmH family.

The protein localises to the cytoplasm. It carries out the reaction cytidine(1402) in 16S rRNA + S-adenosyl-L-methionine = N(4)-methylcytidine(1402) in 16S rRNA + S-adenosyl-L-homocysteine + H(+). Its function is as follows. Specifically methylates the N4 position of cytidine in position 1402 (C1402) of 16S rRNA. The sequence is that of Ribosomal RNA small subunit methyltransferase H from Pseudomonas aeruginosa (strain ATCC 15692 / DSM 22644 / CIP 104116 / JCM 14847 / LMG 12228 / 1C / PRS 101 / PAO1).